The following is a 106-amino-acid chain: Large ribosomal subunit protein uL24 (106 aa).

This sequence belongs to the universal ribosomal protein uL24 family. In terms of assembly, part of the 50S ribosomal subunit.

Its function is as follows. One of two assembly initiator proteins, it binds directly to the 5'-end of the 23S rRNA, where it nucleates assembly of the 50S subunit. In terms of biological role, one of the proteins that surrounds the polypeptide exit tunnel on the outside of the subunit. In Erythrobacter litoralis (strain HTCC2594), this protein is Large ribosomal subunit protein uL24.